The chain runs to 294 residues: tRNA dimethylallyltransferase (294 aa).

10–17 (GPTAVGKT) serves as a coordination point for ATP. Position 12 to 17 (12 to 17 (TAVGKT)) interacts with substrate. Residues 35-38 (DSQQ) form an interaction with substrate tRNA region.

This sequence belongs to the IPP transferase family. Monomer. Mg(2+) serves as cofactor.

It carries out the reaction adenosine(37) in tRNA + dimethylallyl diphosphate = N(6)-dimethylallyladenosine(37) in tRNA + diphosphate. In terms of biological role, catalyzes the transfer of a dimethylallyl group onto the adenine at position 37 in tRNAs that read codons beginning with uridine, leading to the formation of N6-(dimethylallyl)adenosine (i(6)A). This is tRNA dimethylallyltransferase from Streptococcus pneumoniae (strain ATCC 700669 / Spain 23F-1).